Here is a 403-residue protein sequence, read N- to C-terminus: Aminomethyltransferase, mitochondrial (403 aa).

Residues 1–28 (MQRAMTVVPHLGLRLQALPLALGRPLSR) constitute a mitochondrion transit peptide. Residues Glu-232, Arg-261, and Tyr-399 each coordinate substrate.

Belongs to the GcvT family. In terms of assembly, the glycine cleavage system is composed of four proteins: P, T, L and H.

The protein localises to the mitochondrion. It carries out the reaction N(6)-[(R)-S(8)-aminomethyldihydrolipoyl]-L-lysyl-[protein] + (6S)-5,6,7,8-tetrahydrofolate = N(6)-[(R)-dihydrolipoyl]-L-lysyl-[protein] + (6R)-5,10-methylene-5,6,7,8-tetrahydrofolate + NH4(+). In terms of biological role, the glycine cleavage system catalyzes the degradation of glycine. The sequence is that of Aminomethyltransferase, mitochondrial from Canis lupus familiaris (Dog).